Consider the following 385-residue polypeptide: Glucose-fructose oxidoreductase domain-containing protein 2 (385 aa).

The N-terminal stretch at 1–25 is a signal peptide; it reads MKLLPGVGVFGTGSSARVLVPLLRA.

Belongs to the Gfo/Idh/MocA family.

The protein localises to the secreted. It is found in the extracellular space. It localises to the extracellular matrix. Its function is as follows. Promotes matrix assembly. The polypeptide is Glucose-fructose oxidoreductase domain-containing protein 2 (Gfod2) (Mus musculus (Mouse)).